A 214-amino-acid chain; its full sequence is Adenylate kinase (214 aa).

ATP is bound at residue 10–15 (GAGKGT). The interval 30–59 (STGDMFRAAVKNETPLGLEAKSYMDKGHLV) is NMP. Residues Thr31, Arg36, 57–59 (HLV), 85–88 (GFPR), and Gln92 each bind AMP. An LID region spans residues 126–163 (GRWICPVCGASYHTMFNPPKEAGVCDKDGGKLYQREDD). Arg127 serves as a coordination point for ATP. Zn(2+) is bound by residues Cys130 and Cys133. 136-137 (SY) provides a ligand contact to ATP. The Zn(2+) site is built by Cys150 and Asp153. Residues Arg160 and Arg171 each contribute to the AMP site. Gln199 lines the ATP pocket.

This sequence belongs to the adenylate kinase family. Monomer.

It localises to the cytoplasm. It carries out the reaction AMP + ATP = 2 ADP. It functions in the pathway purine metabolism; AMP biosynthesis via salvage pathway; AMP from ADP: step 1/1. Its function is as follows. Catalyzes the reversible transfer of the terminal phosphate group between ATP and AMP. Plays an important role in cellular energy homeostasis and in adenine nucleotide metabolism. This is Adenylate kinase from Brevibacillus brevis (strain 47 / JCM 6285 / NBRC 100599).